A 333-amino-acid polypeptide reads, in one-letter code: UDP-N-acetylglucosamine 4,6-dehydratase (inverting) (333 aa).

Residues 19–22 (TGSF), 43–48 (SRDELK), 67–68 (DV), A87, K91, and 129–130 (LS) each bind NADP(+). K91 is a binding site for substrate. The active site involves K133. NADP(+)-binding residues include Y141 and K145. N173 serves as a coordination point for substrate. An NADP(+)-binding site is contributed by 174–178 (VVGSR). Residues V181, T199, R258, and E261 each coordinate substrate.

The protein belongs to the polysaccharide synthase family. In terms of assembly, homohexamer. It depends on NADP(+) as a cofactor.

The enzyme catalyses UDP-N-acetyl-alpha-D-glucosamine = UDP-2-acetamido-2,6-dideoxy-beta-L-arabino-hex-4-ulose + H2O. In terms of biological role, catalyzes the first step in the biosynthesis of pseudaminic acid, a sialic-acid-like sugar that is used to modify flagellin. Has both C6 dehydratase and C5 epimerase activities that result in the production of both UDP-2-acetamido-2,6-dideoxy-beta-L-arabino-4-hexulose and UDP-2-acetamido-2,6-dideoxy-alpha-D-xylo-4-hexulose. The chain is UDP-N-acetylglucosamine 4,6-dehydratase (inverting) (pseB) from Helicobacter pylori (strain ATCC 700392 / 26695) (Campylobacter pylori).